A 123-amino-acid polypeptide reads, in one-letter code: Small ribosomal subunit protein uS12 (123 aa).

Position 89 is a 3-methylthioaspartic acid (Asp-89).

The protein belongs to the universal ribosomal protein uS12 family. As to quaternary structure, part of the 30S ribosomal subunit. Contacts proteins S8 and S17. May interact with IF1 in the 30S initiation complex.

With S4 and S5 plays an important role in translational accuracy. Its function is as follows. Interacts with and stabilizes bases of the 16S rRNA that are involved in tRNA selection in the A site and with the mRNA backbone. Located at the interface of the 30S and 50S subunits, it traverses the body of the 30S subunit contacting proteins on the other side and probably holding the rRNA structure together. The combined cluster of proteins S8, S12 and S17 appears to hold together the shoulder and platform of the 30S subunit. This chain is Small ribosomal subunit protein uS12, found in Methylobacterium sp. (strain 4-46).